The chain runs to 546 residues: Serine/threonine-protein kinase Chk2 (546 aa).

The disordered stretch occupies residues 1–70 (MKSHHQSHSS…SSHSSSGTLS (70 aa)). Residues 8-70 (HSSTSSKAHD…SSHSSSGTLS (63 aa)) are compositionally biased toward low complexity. Phosphothreonine; by MAP3K20 is present on Thr68. Phosphoserine; by PLK3 is present on Ser71. The residue at position 77 (Thr77) is a Phosphothreonine; by ATM and MAP3K20. At Ser82 the chain carries Phosphoserine; by PLK3. The FHA domain maps to 117 to 179 (YWFGRDKSCE…NGTFVNTELI (63 aa)). One can recognise a Protein kinase domain in the interval 224–490 (YIMSKTLGSG…TEEALNHPWL (267 aa)). ATP-binding positions include 231–238 (GSGACGEV), Lys253, and 306–312 (ELMEGGE). Asp351 functions as the Proton acceptor in the catalytic mechanism. Residues 355 to 356 (EN) and Asp372 contribute to the ATP site. The interval 372 to 398 (DFGQSKILGETSLMRTLCGTPTYLAPE) is T-loop/activation segment. Ser383 bears the Phosphoserine; by autocatalysis mark. Phosphothreonine; by autocatalysis occurs at positions 387 and 391. The residue at position 460 (Ser460) is a Phosphoserine.

Belongs to the protein kinase superfamily. CAMK Ser/Thr protein kinase family. CHK2 subfamily. As to quaternary structure, homodimer. Homodimerization is part of the activation process but the dimer may dissociate following activation. Interacts with PML. Interacts with TP53. Interacts with RB1; phosphorylates RB1. Interacts with BRCA1. Interacts (phosphorylated at Thr-68) with MDC1; requires ATM-mediated phosphorylation of CHEK2. Interacts with TP53BP1; modulates CHEK2 phosphorylation at Thr-68 in response to ionizing radiation. Interacts with CDC25A; phosphorylates CDC25A and mediates its degradation in response to ionizing radiation. Interacts with CUL1; mediates CHEK2 ubiquitination and regulation. Interacts with CDKN2AIP. Interacts (via protein kinase domain) with CCAR2 (via N-terminus). Interacts with SIRT1. Mg(2+) is required as a cofactor. Phosphorylated. Phosphorylated at Ser-82 by PLK3 in response to DNA damage, promoting phosphorylation at Thr-77 by ATM and the G2/M transition checkpoint. Phosphorylation at Thr-77 induces homodimerization. Autophosphorylates at Thr-387 and Thr-391 in the T-loop/activation segment upon dimerization to become fully active. DNA damage-induced autophosphorylation at Ser-383 induces CUL1-mediated ubiquitination and regulates the pro-apoptotic function. Phosphorylation at Ser-460 also regulates ubiquitination. Phosphorylated by PLK4. Post-translationally, ubiquitinated. CUL1-mediated ubiquitination regulates the pro-apoptotic function. Ubiquitination may also regulate protein stability. Ubiquitinated by RNF8 via 'Lys-48'-linked ubiquitination. As to expression, ubiquitously expressed with higher levels in the thymus, spleen and colon (at protein level).

It localises to the nucleus. It is found in the PML body. The protein localises to the nucleoplasm. The catalysed reaction is L-seryl-[protein] + ATP = O-phospho-L-seryl-[protein] + ADP + H(+). It carries out the reaction L-threonyl-[protein] + ATP = O-phospho-L-threonyl-[protein] + ADP + H(+). Its activity is regulated as follows. Activated through phosphorylation at Thr-68 by ATM in response to DNA double-strand breaks. Activation is modulated by several mediators including MDC1 and TP53BP1. Induces homodimerization with exchange of the T-loop/activation segment between protomers and transphosphorylation of the protomers. The autophosphorylated kinase dimer is fully active. Negatively regulated by PPM1D through dephosphorylation of Thr-68. In terms of biological role, serine/threonine-protein kinase which is required for checkpoint-mediated cell cycle arrest, activation of DNA repair and apoptosis in response to the presence of DNA double-strand breaks. May also negatively regulate cell cycle progression during unperturbed cell cycles. Following activation, phosphorylates numerous effectors preferentially at the consensus sequence [L-X-R-X-X-S/T]. Regulates cell cycle checkpoint arrest through phosphorylation of CDC25A, CDC25B and CDC25C, inhibiting their activity. Inhibition of CDC25 phosphatase activity leads to increased inhibitory tyrosine phosphorylation of CDK-cyclin complexes and blocks cell cycle progression. May also phosphorylate NEK6 which is involved in G2/M cell cycle arrest. Regulates DNA repair through phosphorylation of BRCA2, enhancing the association of RAD51 with chromatin which promotes DNA repair by homologous recombination. Also stimulates the transcription of genes involved in DNA repair (including BRCA2) through the phosphorylation and activation of the transcription factor FOXM1. Regulates apoptosis through the phosphorylation of p53/TP53, MDM4 and PML. Phosphorylation of p53/TP53 at 'Ser-20' by CHEK2 may alleviate inhibition by MDM2, leading to accumulation of active p53/TP53. Phosphorylation of MDM4 may also reduce degradation of p53/TP53. Also controls the transcription of pro-apoptotic genes through phosphorylation of the transcription factor E2F1. Tumor suppressor, it may also have a DNA damage-independent function in mitotic spindle assembly by phosphorylating BRCA1. Its absence may be a cause of the chromosomal instability observed in some cancer cells. Promotes the CCAR2-SIRT1 association and is required for CCAR2-mediated SIRT1 inhibition. Under oxidative stress, promotes ATG7 ubiquitination by phosphorylating the E3 ubiquitin ligase TRIM32 at 'Ser-56' leading to positive regulation of the autophagosme assembly. This chain is Serine/threonine-protein kinase Chk2, found in Mus musculus (Mouse).